The primary structure comprises 59 residues: U-reduvitoxin-Pr6a (59 aa).

A signal peptide spans 1–19 (MKVFLLTILLCFLIAYCAG). 3 cysteine pairs are disulfide-bonded: Cys-31–Cys-46, Cys-38–Cys-51, and Cys-45–Cys-58.

The protein belongs to the venom Ptu1-like knottin family. Expressed by the venom gland.

It localises to the secreted. In terms of biological role, binds reversibly and blocks P/Q-type voltage-gated calcium channels (Cav). The polypeptide is U-reduvitoxin-Pr6a (Platymeris rhadamanthus (Red spot assassin bug)).